A 114-amino-acid polypeptide reads, in one-letter code: U17-barytoxin-Tl1a (114 aa).

Residues 1 to 20 (MKTIIVFLSLLVLATKFGDA) form the signal peptide. A propeptide spanning residues 21 to 74 (NEGVNQEQMKEVIQNEFREDFLNEMAPMSLLQQLEAIESTLLEKEADRNSRQKR) is cleaved from the precursor. 3 disulfide bridges follow: Cys-75/Cys-88, Cys-82/Cys-93, and Cys-87/Cys-108.

Belongs to the neurotoxin 14 (magi-1) family. 03 (ICK-30-40) subfamily. As to expression, expressed by the venom gland.

It is found in the secreted. In terms of biological role, ion channel inhibitor. In Trittame loki (Brush-footed trapdoor spider), this protein is U17-barytoxin-Tl1a.